Here is a 345-residue protein sequence, read N- to C-terminus: Neuropeptide receptor 15 (345 aa).

Residues 1–11 (MSVAVGIPYVC) are Extracellular-facing. A helical membrane pass occupies residues 12–32 (FFIILSVVGIIGNVIVIYAIA). The Cytoplasmic segment spans residues 33 to 40 (GDRNMRKS). The chain crosses the membrane as a helical span at residues 41 to 61 (VMNILLLNLAVADLANLIFTI). At 62–90 (PEWIPPVFFGSTDWLFPSFLCPVCRYLEC) the chain is on the extracellular side. Residues Cys82 and Cys171 are joined by a disulfide bond. The helical transmembrane segment at 91–111 (VFLFASISTQMIVCIERYIAI) threads the bilayer. Topologically, residues 112–125 (VLPMQARQLCSRRN) are cytoplasmic. A helical transmembrane segment spans residues 126 to 146 (VLITVLVDWIFVACFASPYAV). Topologically, residues 147–187 (WHSVKTKDRNTNSLRFKLFQLSATCSNTVGKSTWWQGYKLT) are extracellular. The chain crosses the membrane as a helical span at residues 188–208 (EFLAFYFVPCFIITVVYTKVA). Residues 209 to 246 (KCLWCKDPTLQCETRSCLDNKSSSRSSDALRTRRNVVK) lie on the Cytoplasmic side of the membrane. A helical transmembrane segment spans residues 247 to 267 (MLIACVAVYFVCYSPIQVIFL). Over 268-281 (SKAVLNVTIHPPYD) the chain is Extracellular. The helical transmembrane segment at 282-304 (FILLMNALAMTCSASNPLLYTLF) threads the bilayer. Over 305-345 (SQKFRRRLRDVLYCPSDVENETKTYYSINNTSIVGPRASFN) the chain is Cytoplasmic.

It belongs to the G-protein coupled receptor 1 family. Expressed in pharyngeal muscle and AWC, ASG, ASE, ASI, and ASJ sensory neurons. Expressed in ASI neuron. Expressed in AFD neurons and in AVK interneuron.

The protein localises to the cell membrane. In terms of biological role, probable receptor for neuropeptide ligand nlp-8 that plays a role in octopamine signaling and specifically, the octopamine inhibition of aversion responses in olfactory sensory neurons. Plays a crucial role in daf-7 expression. Acts in concert with gpa-4 to activate TGF-beta-like daf-7 secretion in the ASI neuron, thereby promoting larval development and inhibition of dauer diapause. Suppresses immune response against pathogenic infection by inhibiting transcription regulators elt-2 and hlh-30 in ASJ neuron. Promotes pathogen avoidance behavior via intestinal gon-2, independent of aerotaxis. The sequence is that of Neuropeptide receptor 15 (npr-15) from Caenorhabditis elegans.